A 69-amino-acid polypeptide reads, in one-letter code: uncharacterized protein (69 aa).

Residues 22-48 (LFRKSRELSPIKPVRTPTPPAPTPPPM) form a disordered region. Over residues 37-48 (TPTPPAPTPPPM) the composition is skewed to pro residues.

This is an uncharacterized protein from Lepidoptera (butterflies and moths).